The chain runs to 196 residues: RNA pyrophosphohydrolase (196 aa).

A Nudix hydrolase domain is found at 6-149 (GYRPNVGIVI…KRDVYRKVMK (144 aa)). The short motif at 38-59 (GGINDNESAEQAMYRELHEEVG) is the Nudix box element.

This sequence belongs to the Nudix hydrolase family. RppH subfamily. The cofactor is a divalent metal cation.

Its function is as follows. Accelerates the degradation of transcripts by removing pyrophosphate from the 5'-end of triphosphorylated RNA, leading to a more labile monophosphorylated state that can stimulate subsequent ribonuclease cleavage. This chain is RNA pyrophosphohydrolase, found in Haemophilus influenzae (strain ATCC 51907 / DSM 11121 / KW20 / Rd).